The following is a 465-amino-acid chain: Putative mannose-1-phosphate guanylyltransferase (465 aa).

This sequence belongs to the mannose-6-phosphate isomerase type 2 family.

It catalyses the reaction alpha-D-mannose 1-phosphate + GTP + H(+) = GDP-alpha-D-mannose + diphosphate. The protein operates within nucleotide-sugar biosynthesis; GDP-alpha-D-mannose biosynthesis; GDP-alpha-D-mannose from alpha-D-mannose 1-phosphate (GTP route): step 1/1. It participates in bacterial outer membrane biogenesis; LPS O-antigen biosynthesis. In Vibrio cholerae serotype O1 (strain ATCC 39315 / El Tor Inaba N16961), this protein is Putative mannose-1-phosphate guanylyltransferase (rfbA).